Consider the following 558-residue polypeptide: Putative transport protein VC0395_A0715/VC395_1212 (558 aa).

5 helical membrane passes run Val-5 to Leu-25, Leu-37 to Phe-57, Phe-66 to Phe-86, Tyr-92 to Tyr-112, and Val-164 to Leu-184. RCK C-terminal domains are found at residues Arg-203 to Gly-290 and Lys-291 to Phe-374. 6 helical membrane passes run Leu-384–Phe-404, Val-407–Leu-427, Ala-441–Ala-461, Val-476–Ala-496, Ala-504–Asn-524, and Ala-537–Leu-557.

Belongs to the AAE transporter (TC 2.A.81) family. YbjL subfamily.

The protein localises to the cell membrane. The polypeptide is Putative transport protein VC0395_A0715/VC395_1212 (Vibrio cholerae serotype O1 (strain ATCC 39541 / Classical Ogawa 395 / O395)).